A 427-amino-acid polypeptide reads, in one-letter code: Inward rectifier potassium channel 2 (427 aa).

Topologically, residues 1–81 (MGSVRTNRYS…IFTTCVDIRW (81 aa)) are cytoplasmic. An S-nitrosocysteine modification is found at C76. Residues 82–106 (RWMLVIFCLAFVLSWLFFGCVFWLI) form a helical membrane-spanning segment. The Extracellular segment spans residues 107 to 128 (ALLHGDLDASKEGKACVSEVNS). Residues 129 to 140 (FTAAFLFSIETQ) constitute an intramembrane region (helical; Pore-forming). An intramembrane region (pore-forming) is located at residues 141-147 (TTIGYGF). A Selectivity filter motif is present at residues 142-147 (TIGYGF). The Extracellular portion of the chain corresponds to 148 to 156 (RCVTDECPI). A helical transmembrane segment spans residues 157-178 (AVFMVVFQSIVGCIIDAFIIGA). Residues 179–427 (VMAKMAKPKK…PRPLRRESEI (249 aa)) lie on the Cytoplasmic side of the membrane. The interval 181–208 (AKMAKPKKRNETLVFSHNAVIAMRDGKL) is polyphosphoinositide (PIP2)-binding. The segment at 384-427 (SKEEDDSENGVPESTSTDTPPDIDLHNQASVPLEPRPLRRESEI) is disordered. Residues 425-427 (SEI) carry the PDZ-binding motif.

Belongs to the inward rectifier-type potassium channel (TC 1.A.2.1) family. KCNJ2 subfamily. Homotetramer. Homomultimeric and heteromultimeric association with KCNJ4/Kir2.3. Can form heteromeric channels with Kir2.6/KCNJ18. Associates, via its PDZ-recognition domain, with a complex containing LIN7A, LIN7B, LIN7C, DLG1, CASK and APBA1. S-nitrosylation increases the open probability and inward rectifying currents.

Its subcellular location is the cell membrane. The protein resides in the sarcolemma. It is found in the T-tubule. It carries out the reaction K(+)(in) = K(+)(out). Its activity is regulated as follows. Activated by phosphatidylinositol 4,5 biphosphate (PtdIns(4,5)P2). In terms of biological role, inward rectifier potassium channels are characterized by a greater tendency to allow potassium to flow into the cell rather than out of it. Their voltage dependence is regulated by the concentration of extracellular potassium; as external potassium is raised, the voltage range of the channel opening shifts to more positive voltages. The inward rectification is mainly due to the blockage of outward current by internal magnesium. Can be blocked by extracellular barium or cesium. Probably participates in establishing action potential waveform and excitability of neuronal and muscle tissues. The polypeptide is Inward rectifier potassium channel 2 (KCNJ2) (Macaca mulatta (Rhesus macaque)).